A 380-amino-acid polypeptide reads, in one-letter code: Cytochrome b (380 aa).

Helical transmembrane passes span 33–53 (FGSLLGLCLITQLLTGLFLAM), 77–98 (WLIRNMHANGASFFFICLYMHI), 113–133 (WNIGVVLFLLVMMTSFVGYVL), and 178–198 (FFAFHFLFPFVVAAFTMLHLL). Positions 83 and 97 each coordinate heme b. Heme b-binding residues include His-182 and His-196. Residue His-201 coordinates a ubiquinone. Helical transmembrane passes span 226 to 246 (YKDLLGFAVMLLGLTALALFA), 288 to 308 (LGGVLALLFSILVLMVVPFLH), 320 to 340 (LTQMLFWVLVADMLVLTWIGG), and 347 to 367 (FIIIGQVASVLYFSLFLVLFP).

Belongs to the cytochrome b family. The cytochrome bc1 complex contains 3 respiratory subunits (MT-CYB, CYC1 and UQCRFS1), 2 core proteins (UQCRC1 and UQCRC2) and probably 6 low-molecular weight proteins. The cofactor is heme b.

The protein resides in the mitochondrion inner membrane. Component of the ubiquinol-cytochrome c reductase complex (complex III or cytochrome b-c1 complex) that is part of the mitochondrial respiratory chain. The b-c1 complex mediates electron transfer from ubiquinol to cytochrome c. Contributes to the generation of a proton gradient across the mitochondrial membrane that is then used for ATP synthesis. The chain is Cytochrome b (mt-cyb) from Gadus morhua (Atlantic cod).